We begin with the raw amino-acid sequence, 695 residues long: DNA ligase (695 aa).

Residues 39–43, 88–89, and Glu-124 contribute to the NAD(+) site; these read DAEYD and SL. Catalysis depends on Lys-126, which acts as the N6-AMP-lysine intermediate. NAD(+) contacts are provided by Arg-147, Glu-183, Lys-299, and Lys-323. The Zn(2+) site is built by Cys-419, Cys-422, Cys-437, and Cys-443. Residues 612 to 695 form the BRCT domain; that stretch reads PAQGHLSGKT…ELAGIGPVGP (84 aa).

It belongs to the NAD-dependent DNA ligase family. LigA subfamily. Requires Mg(2+) as cofactor. Mn(2+) is required as a cofactor.

It carries out the reaction NAD(+) + (deoxyribonucleotide)n-3'-hydroxyl + 5'-phospho-(deoxyribonucleotide)m = (deoxyribonucleotide)n+m + AMP + beta-nicotinamide D-nucleotide.. DNA ligase that catalyzes the formation of phosphodiester linkages between 5'-phosphoryl and 3'-hydroxyl groups in double-stranded DNA using NAD as a coenzyme and as the energy source for the reaction. It is essential for DNA replication and repair of damaged DNA. The polypeptide is DNA ligase (Gluconacetobacter diazotrophicus (strain ATCC 49037 / DSM 5601 / CCUG 37298 / CIP 103539 / LMG 7603 / PAl5)).